Consider the following 255-residue polypeptide: EEF1A lysine methyltransferase 4 (255 aa).

Residues Trp-26 and Tyr-30 each coordinate S-adenosyl-L-methionine. Residue Tyr-39 is modified to Phosphotyrosine. Residues Trp-41, Gly-66, 88–89 (DY), 113–114 (DV), and Lys-130 each bind S-adenosyl-L-methionine. Positions 129-134 (EKGTLD) match the Required for methyltransferase activity motif.

This sequence belongs to the methyltransferase superfamily.

It carries out the reaction L-lysyl-[protein] + S-adenosyl-L-methionine = N(6)-methyl-L-lysyl-[protein] + S-adenosyl-L-homocysteine + H(+). The catalysed reaction is N(6)-methyl-L-lysyl-[protein] + S-adenosyl-L-methionine = N(6),N(6)-dimethyl-L-lysyl-[protein] + S-adenosyl-L-homocysteine + H(+). The enzyme catalyses N(6),N(6)-dimethyl-L-lysyl-[protein] + S-adenosyl-L-methionine = N(6),N(6),N(6)-trimethyl-L-lysyl-[protein] + S-adenosyl-L-homocysteine + H(+). Its function is as follows. Protein-lysine methyltransferase that efficiently catalyzes three successive methylations on 'Lys-36' in eukaryotic translation elongation factor 1 alpha (EEF1A1 or EEF1A2). This chain is EEF1A lysine methyltransferase 4, found in Mus musculus (Mouse).